Reading from the N-terminus, the 365-residue chain is Aminomethyltransferase (365 aa).

Belongs to the GcvT family. As to quaternary structure, the glycine cleavage system is composed of four proteins: P, T, L and H.

It carries out the reaction N(6)-[(R)-S(8)-aminomethyldihydrolipoyl]-L-lysyl-[protein] + (6S)-5,6,7,8-tetrahydrofolate = N(6)-[(R)-dihydrolipoyl]-L-lysyl-[protein] + (6R)-5,10-methylene-5,6,7,8-tetrahydrofolate + NH4(+). In terms of biological role, the glycine cleavage system catalyzes the degradation of glycine. The sequence is that of Aminomethyltransferase from Geobacillus thermodenitrificans (strain NG80-2).